Consider the following 133-residue polypeptide: Interleukin-4 (133 aa).

The signal sequence occupies residues 1-24; it reads MGLTSQLIPTLVCLLVCTSNFAHG. Disulfide bonds link Cys-27–Cys-133, Cys-48–Cys-85, and Cys-70–Cys-105. 4 N-linked (GlcNAc...) asparagine glycosylation sites follow: Asn-62, Asn-96, Asn-102, and Asn-108.

Belongs to the IL-4/IL-13 family.

The protein localises to the secreted. Functionally, participates in at least several B-cell activation processes as well as of other cell types. It is a costimulator of DNA-synthesis. It induces the expression of class II MHC molecules on resting B-cells. It enhances both secretion and cell surface expression of IgE and IgG1. It also regulates the expression of the low affinity Fc receptor for IgE (CD23) on both lymphocytes and monocytes. Positively regulates IL31RA expression in macrophages. Stimulates autophagy in dendritic cells by interfering with mTORC1 signaling and through the induction of RUFY4. The polypeptide is Interleukin-4 (IL4) (Lama glama (Llama)).